We begin with the raw amino-acid sequence, 257 residues long: Protein YIPF5 (257 aa).

The Cytoplasmic portion of the chain corresponds to 1-124; that stretch reads MSGFDNLNSG…RASDGSIMNE (124 aa). The tract at residues 75–106 is interaction with Sec23; that stretch reads PPTPQTFYGDSFEEEPPLLEELGINFDHIWQK. A helical membrane pass occupies residues 125 to 145; that stretch reads TDLAGPVVFCLAFGATLLLAG. A topological domain (lumenal) is located at residue K146. A helical transmembrane segment spans residues 147–167; that stretch reads IQFGYVYGISAIGCLGMFCLL. The Cytoplasmic portion of the chain corresponds to 168-173; sequence NLMSMT. The chain crosses the membrane as a helical span at residues 174 to 194; sequence GVSFGCVASVLGYCLLPMILL. Over 195 to 196 the chain is Lumenal; that stretch reads SS. A helical transmembrane segment spans residues 197–217; it reads FAVVFSLQGMVGILLTATIIG. At 218-236 the chain is on the cytoplasmic side; it reads WCSFSASKIFISALAMDGQ. A helical transmembrane segment spans residues 237–257; the sequence is QLLVAYPCALLYGVFALISVF.

It belongs to the YIP1 family. In terms of assembly, interacts with the COPII coat components Sec23 (SEC23A and/or SEC23B) and Sec24 (SEC24A and/or SEC24B). Interacts with YIF1A. May interact with RAB1A. Interacts with YIPF3 and YIPF4.

The protein localises to the endoplasmic reticulum membrane. It localises to the golgi apparatus. The protein resides in the cis-Golgi network membrane. It is found in the cytoplasmic vesicle. Its subcellular location is the COPII-coated vesicle. Plays a role in transport between endoplasmic reticulum and Golgi. In pancreatic beta cells, required to transport proinsulin from endoplasmic reticulum into the Golgi. This Rattus norvegicus (Rat) protein is Protein YIPF5.